The sequence spans 426 residues: Serine--tRNA ligase (426 aa).

230–232 (TAE) serves as a coordination point for L-serine. 261–263 (RSE) contacts ATP. Glutamate 284 contributes to the L-serine binding site. 348-351 (EISS) is a binding site for ATP. Serine 384 is a binding site for L-serine.

This sequence belongs to the class-II aminoacyl-tRNA synthetase family. Type-1 seryl-tRNA synthetase subfamily. In terms of assembly, homodimer. The tRNA molecule binds across the dimer.

The protein localises to the cytoplasm. It carries out the reaction tRNA(Ser) + L-serine + ATP = L-seryl-tRNA(Ser) + AMP + diphosphate + H(+). The enzyme catalyses tRNA(Sec) + L-serine + ATP = L-seryl-tRNA(Sec) + AMP + diphosphate + H(+). It functions in the pathway aminoacyl-tRNA biosynthesis; selenocysteinyl-tRNA(Sec) biosynthesis; L-seryl-tRNA(Sec) from L-serine and tRNA(Sec): step 1/1. In terms of biological role, catalyzes the attachment of serine to tRNA(Ser). Is also able to aminoacylate tRNA(Sec) with serine, to form the misacylated tRNA L-seryl-tRNA(Sec), which will be further converted into selenocysteinyl-tRNA(Sec). This chain is Serine--tRNA ligase, found in Erythrobacter litoralis (strain HTCC2594).